Reading from the N-terminus, the 386-residue chain is Bifunctional enzyme IspD/IspF (386 aa).

A 2-C-methyl-D-erythritol 4-phosphate cytidylyltransferase region spans residues 1–225; sequence MYNFVTLSIL…SCLSAPSSDT (225 aa). Residues 226-386 form a 2-C-methyl-D-erythritol 2,4-cyclodiphosphate synthase region; sequence LSGVGFDVHA…NLKYFDWTKI (161 aa). 2 residues coordinate a divalent metal cation: D232 and H234. 4-CDP-2-C-methyl-D-erythritol 2-phosphate is bound by residues 232 to 234 and 258 to 259; these read DVH and HS. H266 is a binding site for a divalent metal cation. Residues 280–282, 285–289, 356–359, F363, and R366 each bind 4-CDP-2-C-methyl-D-erythritol 2-phosphate; these read DIG, FPDND, and TTTE.

In the N-terminal section; belongs to the IspD/TarI cytidylyltransferase family. IspD subfamily. The protein in the C-terminal section; belongs to the IspF family. The cofactor is a divalent metal cation.

The catalysed reaction is 2-C-methyl-D-erythritol 4-phosphate + CTP + H(+) = 4-CDP-2-C-methyl-D-erythritol + diphosphate. It carries out the reaction 4-CDP-2-C-methyl-D-erythritol 2-phosphate = 2-C-methyl-D-erythritol 2,4-cyclic diphosphate + CMP. It participates in isoprenoid biosynthesis; isopentenyl diphosphate biosynthesis via DXP pathway; isopentenyl diphosphate from 1-deoxy-D-xylulose 5-phosphate: step 2/6. Its pathway is isoprenoid biosynthesis; isopentenyl diphosphate biosynthesis via DXP pathway; isopentenyl diphosphate from 1-deoxy-D-xylulose 5-phosphate: step 4/6. In terms of biological role, bifunctional enzyme that catalyzes the formation of 4-diphosphocytidyl-2-C-methyl-D-erythritol from CTP and 2-C-methyl-D-erythritol 4-phosphate (MEP) (IspD), and catalyzes the conversion of 4-diphosphocytidyl-2-C-methyl-D-erythritol 2-phosphate (CDP-ME2P) to 2-C-methyl-D-erythritol 2,4-cyclodiphosphate (ME-CPP) with a corresponding release of cytidine 5-monophosphate (CMP) (IspF). The protein is Bifunctional enzyme IspD/IspF of Sulfurimonas denitrificans (strain ATCC 33889 / DSM 1251) (Thiomicrospira denitrificans (strain ATCC 33889 / DSM 1251)).